The primary structure comprises 232 residues: 2-C-methyl-D-erythritol 4-phosphate cytidylyltransferase (232 aa).

Belongs to the IspD/TarI cytidylyltransferase family. IspD subfamily.

It carries out the reaction 2-C-methyl-D-erythritol 4-phosphate + CTP + H(+) = 4-CDP-2-C-methyl-D-erythritol + diphosphate. It participates in isoprenoid biosynthesis; isopentenyl diphosphate biosynthesis via DXP pathway; isopentenyl diphosphate from 1-deoxy-D-xylulose 5-phosphate: step 2/6. Its function is as follows. Catalyzes the formation of 4-diphosphocytidyl-2-C-methyl-D-erythritol from CTP and 2-C-methyl-D-erythritol 4-phosphate (MEP). The chain is 2-C-methyl-D-erythritol 4-phosphate cytidylyltransferase from Neorickettsia sennetsu (strain ATCC VR-367 / Miyayama) (Ehrlichia sennetsu).